Consider the following 246-residue polypeptide: UDP-N-acetyl-D-mannosaminuronic acid transferase (246 aa).

It belongs to the glycosyltransferase 26 family.

The enzyme catalyses UDP-N-acetyl-alpha-D-mannosaminouronate + N-acetyl-alpha-D-glucosaminyl-di-trans,octa-cis-undecaprenyl diphosphate = beta-D-ManNAcA-(1-&gt;4)-alpha-D-GlcNAc-di-trans,octa-cis-undecaprenyl diphosphate + UDP + H(+). Its pathway is bacterial outer membrane biogenesis; enterobacterial common antigen biosynthesis. Functionally, catalyzes the synthesis of Und-PP-GlcNAc-ManNAcA (Lipid II), the second lipid-linked intermediate involved in enterobacterial common antigen (ECA) synthesis. In Salmonella agona (strain SL483), this protein is UDP-N-acetyl-D-mannosaminuronic acid transferase.